Here is a 761-residue protein sequence, read N- to C-terminus: Zinc finger protein 711 (761 aa).

Glycyl lysine isopeptide (Lys-Gly) (interchain with G-Cter in SUMO2) cross-links involve residues lysine 224, lysine 235, and lysine 296. 5 consecutive C2H2-type zinc fingers follow at residues 383-408, 414-436, 476-499, 505-527, and 533-556; these read YPCH…HPDH, YQCT…LESH, HKCK…LAVH, HVCV…MRTH, and YQCQ…KSKH. The tract at residues 515–761 is required for transcriptional activation; that stretch reads RHPSELKKHM…IMRHHKEALM (247 aa). The segment at 562 to 584 adopts a C2H2-type 6; atypical zinc-finger fold; sequence YKCEHCPQAFGDERELQRHLDLF. 3 residues coordinate Zn(2+): cysteine 564, cysteine 567, and histidine 580. 6 consecutive C2H2-type zinc fingers follow at residues 590-613, 619-641, 647-670, 676-698, 704-727, and 733-755; these read HQCP…ISVH, HKCE…SDIH, HQCR…LSVH, LKCK…MKTH, YQCE…ISIH, and HRCE…IMRH.

The protein belongs to the krueppel C2H2-type zinc-finger protein family. As to quaternary structure, interacts with PHF8. As to expression, expressed in neural tissues.

The protein localises to the nucleus. Its function is as follows. Transcription regulator required for brain development. Probably acts as a transcription factor that binds to the promoter of target genes and recruits PHF8 histone demethylase, leading to activated expression of genes involved in neuron development, such as KDM5C. May compete with transcription factor ARX for activation of expression of KDM5C. The chain is Zinc finger protein 711 (ZNF711) from Homo sapiens (Human).